Reading from the N-terminus, the 141-residue chain is Small ribosomal subunit protein uS19 (141 aa).

The protein belongs to the universal ribosomal protein uS19 family.

Functionally, protein S19 forms a complex with S13 that binds strongly to the 16S ribosomal RNA. The sequence is that of Small ribosomal subunit protein uS19 from Halorubrum lacusprofundi (strain ATCC 49239 / DSM 5036 / JCM 8891 / ACAM 34).